A 505-amino-acid polypeptide reads, in one-letter code: Metal transporter Nramp3.2 (505 aa).

Helical transmembrane passes span 50–70 (LWLF…PGNL), 78–98 (AIAG…GLLV), 127–147 (MVLW…EVIG), 159–179 (FVPL…FLFL), 187–207 (LEAV…WMFA), 233–253 (AVGV…SALV), 280–300 (ALVI…KGFY), 321–341 (YGGG…AAGQ), 369–389 (ALIT…VFDT), 400–420 (WLNV…LCLV), 439–459 (AWLV…DFFF), and 466–486 (AFTT…IYLI).

The protein belongs to the NRAMP (TC 2.A.55) family. As to expression, expressed in roots, stems, buds and leaves.

The protein localises to the vacuole membrane. The catalysed reaction is Mn(2+)(in) = Mn(2+)(out). The enzyme catalyses Fe(2+)(in) = Fe(2+)(out). Its function is as follows. Divalent metal transporter. Can transport manganese (Mn) and iron (Fe). Involved in the release of metals stored in the vacuole. This chain is Metal transporter Nramp3.2, found in Populus trichocarpa (Western balsam poplar).